The chain runs to 764 residues: 5-methyltetrahydropteroyltriglutamate--homocysteine methyltransferase (764 aa).

5-methyltetrahydropteroyltri-L-glutamate-binding positions include 16–19 (RELK) and lysine 115. Residues 435 to 437 (IGS) and glutamate 488 contribute to the L-homocysteine site. Residues 435–437 (IGS) and glutamate 488 contribute to the L-methionine site. 5-methyltetrahydropteroyltri-L-glutamate is bound by residues 519 to 520 (RC) and tryptophan 565. Position 603 (aspartate 603) interacts with L-homocysteine. Aspartate 603 lines the L-methionine pocket. Glutamate 609 is a 5-methyltetrahydropteroyltri-L-glutamate binding site. 3 residues coordinate Zn(2+): histidine 645, cysteine 647, and glutamate 669. The active-site Proton donor is histidine 698. Cysteine 730 is a binding site for Zn(2+).

The protein belongs to the vitamin-B12 independent methionine synthase family. Zn(2+) serves as cofactor.

It catalyses the reaction 5-methyltetrahydropteroyltri-L-glutamate + L-homocysteine = tetrahydropteroyltri-L-glutamate + L-methionine. It functions in the pathway amino-acid biosynthesis; L-methionine biosynthesis via de novo pathway; L-methionine from L-homocysteine (MetE route): step 1/1. Its function is as follows. Catalyzes the transfer of a methyl group from 5-methyltetrahydrofolate to homocysteine resulting in methionine formation. The polypeptide is 5-methyltetrahydropteroyltriglutamate--homocysteine methyltransferase (Burkholderia mallei (strain NCTC 10247)).